The chain runs to 439 residues: Ornithine aminotransferase, mitochondrial (439 aa).

Residues 1 to 35 (MLSKLASLQTVAALRRGLRTSVASATSVATKKTEQ) constitute a mitochondrion transit peptide. 2 positions are modified to N6-acetyllysine: K49 and K66. The residue at position 102 (K102) is an N6-succinyllysine. K107 bears the N6-acetyllysine; alternate mark. At K107 the chain carries N6-succinyllysine; alternate. K292 is modified (N6-(pyridoxal phosphate)lysine). Residue K362 is modified to N6-acetyllysine; alternate. K362 is modified (N6-succinyllysine; alternate). Residues K386 and K392 each carry the N6-acetyllysine modification. An N6-acetyllysine; alternate modification is found at K405. At K405 the chain carries N6-succinyllysine; alternate. K421 is modified (N6-acetyllysine).

In terms of assembly, homohexamer. It depends on pyridoxal 5'-phosphate as a cofactor. Expressed in the head and flagellum of epididymal sperm but not in testicular sperm (at protein level).

It localises to the mitochondrion matrix. The enzyme catalyses L-ornithine + 2-oxoglutarate = L-glutamate 5-semialdehyde + L-glutamate. The protein operates within amino-acid biosynthesis; L-proline biosynthesis; L-glutamate 5-semialdehyde from L-ornithine: step 1/1. Its function is as follows. Catalyzes the reversible interconversion of L-ornithine and 2-oxoglutarate to L-glutamate semialdehyde and L-glutamate. The protein is Ornithine aminotransferase, mitochondrial (Oat) of Rattus norvegicus (Rat).